The sequence spans 427 residues: Vitamin D3 receptor (427 aa).

Residues 21–96 (PRICGVCGDR…IGMMKEFILT (76 aa)) constitute a DNA-binding region (nuclear receptor). Zn(2+) is bound by residues Cys24, Cys27, Cys41, Cys44, Cys60, Cys66, Cys76, and Cys79. NR C4-type zinc fingers lie at residues 24 to 44 (CGVC…CEGC) and 60 to 79 (CPFN…CQAC). Positions 97-126 (DEEVQRKREMILKRKEEEALKDSLRPKLSE) are hinge. The region spanning 127–423 (EQQRIIAILL…LTPLVLEVFG (297 aa)) is the NR LBD domain. Tyr143 contacts calcitriol. A disordered region spans residues 149–201 (DFGQFRPPVRGDEEEGTLPSRSSSAHAPSFSGSSSSSCSDQYTSSPDTMEPAS). Over residues 168-193 (SRSSSAHAPSFSGSSSSSCSDQYTSS) the composition is skewed to low complexity. Ser237 contributes to the calcitriol binding site. The tract at residues 246 to 264 (KMIPGFRDLTAEDQIVLLK) is interaction with coactivator LXXLL motif. Positions 274, 278, 305, and 397 each coordinate calcitriol. Residues 416-424 (PLVLEVFGN) carry the 9aaTAD motif.

It belongs to the nuclear hormone receptor family. NR1 subfamily. In terms of assembly, homodimer in the absence of bound vitamin D3. Heterodimer with RXRA after vitamin D3 binding. Interacts with MED1, NCOA1, NCOA2, NCOA3 and NCOA6 coactivators, leading to a strong increase of transcription of target genes. Interacts with the corepressor NCOR1. Interacts with SNW1. Interacts with IRX4, the interaction does not affect its transactivation activity. Interacts with CRY1. Interacts with CRY2 in a ligand-dependent manner. Ubiquitinated by UBR5, leading to its degradation: UBR5 specifically recognizes and binds ligand-bound VDR when it is not associated with coactivators (NCOAs). In presence of NCOAs, the UBR5-degron is not accessible, preventing its ubiquitination and degradation.

It is found in the nucleus. Its subcellular location is the cytoplasm. Its function is as follows. Nuclear receptor for calcitriol, the active form of vitamin D3 which mediates the action of this vitamin on cells. Enters the nucleus upon vitamin D3 binding where it forms heterodimers with the retinoid X receptor/RXR. The VDR-RXR heterodimers bind to specific response elements on DNA and activate the transcription of vitamin D3-responsive target genes. Plays a central role in calcium homeostasis. Also functions as a receptor for the secondary bile acid lithocholic acid (LCA) and its metabolites. This chain is Vitamin D3 receptor (VDR), found in Sus scrofa (Pig).